A 309-amino-acid polypeptide reads, in one-letter code: 2-phospho-L-lactate transferase (309 aa).

Residues Asp50 and Lys89 each contribute to the 7,8-didemethyl-8-hydroxy-5-deazariboflavin site.

It belongs to the CofD family. Homodimer. The cofactor is Mg(2+).

The catalysed reaction is (2S)-lactyl-2-diphospho-5'-guanosine + 7,8-didemethyl-8-hydroxy-5-deazariboflavin = oxidized coenzyme F420-0 + GMP + H(+). It participates in cofactor biosynthesis; coenzyme F420 biosynthesis. Catalyzes the transfer of the 2-phospholactate moiety from (2S)-lactyl-2-diphospho-5'-guanosine to 7,8-didemethyl-8-hydroxy-5-deazariboflavin (FO) with the formation of oxidized coenzyme F420-0 and GMP. This Methanococcus maripaludis (strain C5 / ATCC BAA-1333) protein is 2-phospho-L-lactate transferase.